The following is a 360-amino-acid chain: Homeobox-leucine zipper protein HOX21 (360 aa).

2 disordered regions span residues 25–75 and 88–126; these read QQAA…SSAQ and MLGK…EKKR. Residues 36-55 show a composition bias toward basic residues; the sequence is HHHHHHHGHHHEQQQHHHHL. The segment covering 56-68 has biased composition (pro residues); that stretch reads GPPPPPPPHPHNP. Residues 97–109 are compositionally biased toward gly residues; that stretch reads GDGGGGGDEVNGG. The homeobox DNA-binding region spans 121-180; sequence AGEKKRRLNVEQVRTLEKNFELGNKLEPERKMQLARALGLQPRQVAIWFQNRRARWKTKQ. The segment at 179–223 is leucine-zipper; it reads KQLEKDYDALKRQLDAVKAENDALLNHNKKLQAEIVALKGREAAS. Disordered regions lie at residues 233–278 and 299–328; these read EASC…GGGG and GVDI…GNVQ. A compositionally biased stretch (polar residues) spans 234–246; the sequence is ASCSNRSENSSEI.

This sequence belongs to the HD-ZIP homeobox family. Class I subfamily. In terms of tissue distribution, expressed in seedlings, roots, stems, leaf blades and panicles.

It is found in the nucleus. In terms of biological role, probable transcription factor. This is Homeobox-leucine zipper protein HOX21 (HOX21) from Oryza sativa subsp. indica (Rice).